The primary structure comprises 156 residues: Transcriptional repressor NrdR (156 aa).

A zinc finger lies at 3–34 (CPKCNSTHSRVVDSRHADEVNAIRRRRECEEC). The region spanning 49-139 (LIVVKKDGTR…VYKEFKDVDQ (91 aa)) is the ATP-cone domain.

Belongs to the NrdR family. Zn(2+) is required as a cofactor.

Negatively regulates transcription of bacterial ribonucleotide reductase nrd genes and operons by binding to NrdR-boxes. The protein is Transcriptional repressor NrdR of Staphylococcus saprophyticus subsp. saprophyticus (strain ATCC 15305 / DSM 20229 / NCIMB 8711 / NCTC 7292 / S-41).